We begin with the raw amino-acid sequence, 488 residues long: Aspartyl/glutamyl-tRNA(Asn/Gln) amidotransferase subunit B (488 aa).

Belongs to the GatB/GatE family. GatB subfamily. Heterotrimer of A, B and C subunits.

The catalysed reaction is L-glutamyl-tRNA(Gln) + L-glutamine + ATP + H2O = L-glutaminyl-tRNA(Gln) + L-glutamate + ADP + phosphate + H(+). The enzyme catalyses L-aspartyl-tRNA(Asn) + L-glutamine + ATP + H2O = L-asparaginyl-tRNA(Asn) + L-glutamate + ADP + phosphate + 2 H(+). Its function is as follows. Allows the formation of correctly charged Asn-tRNA(Asn) or Gln-tRNA(Gln) through the transamidation of misacylated Asp-tRNA(Asn) or Glu-tRNA(Gln) in organisms which lack either or both of asparaginyl-tRNA or glutaminyl-tRNA synthetases. The reaction takes place in the presence of glutamine and ATP through an activated phospho-Asp-tRNA(Asn) or phospho-Glu-tRNA(Gln). The chain is Aspartyl/glutamyl-tRNA(Asn/Gln) amidotransferase subunit B from Neorickettsia sennetsu (strain ATCC VR-367 / Miyayama) (Ehrlichia sennetsu).